A 167-amino-acid chain; its full sequence is Mitochondrial inner membrane protease subunit 1 (167 aa).

Catalysis depends on residues S40 and K83.

The protein belongs to the peptidase S26 family. IMP1 subfamily. As to quaternary structure, heterodimer of 2 subunits, IMMPL1 and IMMPL2.

Its subcellular location is the mitochondrion inner membrane. Its function is as follows. Catalyzes the removal of transit peptides required for the targeting of proteins from the mitochondrial matrix, across the inner membrane, into the inter-membrane space. In Xenopus tropicalis (Western clawed frog), this protein is Mitochondrial inner membrane protease subunit 1 (immp1l).